We begin with the raw amino-acid sequence, 721 residues long: Polyribonucleotide nucleotidyltransferase (721 aa).

Mg(2+) contacts are provided by Asp-495 and Asp-501. In terms of domain architecture, KH spans 562 to 621 (PRLLSFRIDPELIGTVIGPGGRTIKGITERTNTKIDIEDGGIVTIASHDGAAAEEAQKII). Residues 631–699 (GEIFPGVVTR…SRGRINLTLR (69 aa)) form the S1 motif domain. A disordered region spans residues 702–721 (GQNGGMSYPEPTPTPVAPLS). The segment covering 711–721 (EPTPTPVAPLS) has biased composition (pro residues).

It belongs to the polyribonucleotide nucleotidyltransferase family. Requires Mg(2+) as cofactor.

It localises to the cytoplasm. The enzyme catalyses RNA(n+1) + phosphate = RNA(n) + a ribonucleoside 5'-diphosphate. Its function is as follows. Involved in mRNA degradation. Catalyzes the phosphorolysis of single-stranded polyribonucleotides processively in the 3'- to 5'-direction. The polypeptide is Polyribonucleotide nucleotidyltransferase (Prochlorococcus marinus (strain MIT 9301)).